A 111-amino-acid chain; its full sequence is Large ribosomal subunit protein uL22 (111 aa).

Belongs to the universal ribosomal protein uL22 family. In terms of assembly, part of the 50S ribosomal subunit.

This protein binds specifically to 23S rRNA; its binding is stimulated by other ribosomal proteins, e.g. L4, L17, and L20. It is important during the early stages of 50S assembly. It makes multiple contacts with different domains of the 23S rRNA in the assembled 50S subunit and ribosome. Its function is as follows. The globular domain of the protein is located near the polypeptide exit tunnel on the outside of the subunit, while an extended beta-hairpin is found that lines the wall of the exit tunnel in the center of the 70S ribosome. The chain is Large ribosomal subunit protein uL22 from Geobacter sulfurreducens (strain ATCC 51573 / DSM 12127 / PCA).